Here is a 71-residue protein sequence, read N- to C-terminus: DNA-directed RNA polymerase subunit omega (71 aa).

Belongs to the RNA polymerase subunit omega family. The RNAP catalytic core consists of 2 alpha, 1 beta, 1 beta' and 1 omega subunit. When a sigma factor is associated with the core the holoenzyme is formed, which can initiate transcription.

It carries out the reaction RNA(n) + a ribonucleoside 5'-triphosphate = RNA(n+1) + diphosphate. Its function is as follows. Promotes RNA polymerase assembly. Latches the N- and C-terminal regions of the beta' subunit thereby facilitating its interaction with the beta and alpha subunits. The sequence is that of DNA-directed RNA polymerase subunit omega from Levilactobacillus brevis (strain ATCC 367 / BCRC 12310 / CIP 105137 / JCM 1170 / LMG 11437 / NCIMB 947 / NCTC 947) (Lactobacillus brevis).